The sequence spans 357 residues: MAIDENKQKALAAALGQIEKQFGKGSIMRLGEDRSMDVETISTGSLSLDIALGAGGLPMGRIVEIYGPESSGKTTLTLQVIAAAQREGKTCAFIDAEHALDPIYAKKLGVDIDNLLCSQPDTGEQALEICDALTRSGAVDVIIVDSVAALTPKAEIEGEIGDSHMGLAARMMSQAMRKLAGNLKQANTLLIFINQIRMKIGVMFGNPETTTGGNALKFYASVRLDIRRTGAIKEGEEVVGSETRVKVVKNKVAAPFKQAEFQILYGEGINIHGELVDLGVKHKLIEKAGAWYSYNGDKIGQGKANACNFLKENPAVAAELDKKLREMLLHKGNELTPATAGNSHDEDAFADEGNEEF.

Residue 67–74 (GPESSGKT) coordinates ATP. The segment at 333-357 (NELTPATAGNSHDEDAFADEGNEEF) is disordered. The segment covering 348–357 (AFADEGNEEF) has biased composition (acidic residues).

The protein belongs to the RecA family.

Its subcellular location is the cytoplasm. Can catalyze the hydrolysis of ATP in the presence of single-stranded DNA, the ATP-dependent uptake of single-stranded DNA by duplex DNA, and the ATP-dependent hybridization of homologous single-stranded DNAs. It interacts with LexA causing its activation and leading to its autocatalytic cleavage. In Pectobacterium carotovorum subsp. carotovorum (strain PC1), this protein is Protein RecA.